A 322-amino-acid chain; its full sequence is Tubulin alpha-4 chain (322 aa).

6 residues coordinate GTP: serine 15, glycine 19, threonine 20, threonine 54, asparagine 81, and asparagine 103. Glutamate 129 is an active-site residue.

The protein belongs to the tubulin family. In terms of assembly, dimer of alpha and beta chains. A typical microtubule is a hollow water-filled tube with an outer diameter of 25 nm and an inner diameter of 15 nM. Alpha-beta heterodimers associate head-to-tail to form protofilaments running lengthwise along the microtubule wall with the beta-tubulin subunit facing the microtubule plus end conferring a structural polarity. Microtubules usually have 13 protofilaments but different protofilament numbers can be found in some organisms and specialized cells. Mg(2+) is required as a cofactor. Some glutamate residues at the C-terminus are polyglycylated, resulting in polyglycine chains on the gamma-carboxyl group. Glycylation is mainly limited to tubulin incorporated into axonemes (cilia and flagella) whereas glutamylation is prevalent in neuronal cells, centrioles, axonemes, and the mitotic spindle. Both modifications can coexist on the same protein on adjacent residues, and lowering polyglycylation levels increases polyglutamylation, and reciprocally. The precise function of polyglycylation is still unclear. In terms of processing, some glutamate residues at the C-terminus are polyglutamylated, resulting in polyglutamate chains on the gamma-carboxyl group. Polyglutamylation plays a key role in microtubule severing by spastin (SPAST). SPAST preferentially recognizes and acts on microtubules decorated with short polyglutamate tails: severing activity by SPAST increases as the number of glutamates per tubulin rises from one to eight, but decreases beyond this glutamylation threshold.

The protein localises to the cytoplasm. It is found in the cytoskeleton. It carries out the reaction GTP + H2O = GDP + phosphate + H(+). In terms of biological role, tubulin is the major constituent of microtubules, a cylinder consisting of laterally associated linear protofilaments composed of alpha- and beta-tubulin heterodimers. Microtubules grow by the addition of GTP-tubulin dimers to the microtubule end, where a stabilizing cap forms. Below the cap, tubulin dimers are in GDP-bound state, owing to GTPase activity of alpha-tubulin. The protein is Tubulin alpha-4 chain of Gallus gallus (Chicken).